Here is a 447-residue protein sequence, read N- to C-terminus: Acidic leucine-rich nuclear phosphoprotein 32-related protein (447 aa).

LRR repeat units lie at residues 49 to 70, 71 to 90, and 96 to 117; these read NLQHLSVANIGVSSLEQFPRLG, NLQKLILSDNRITVGLEFLV, and SFCDLDLSNNRIQFVEDLAPLA. The LRRCT domain maps to 129 to 167; sequence CPVTRLKDYRSRVFGLIKTLKYLDKTDAEGNERPESDDE. A disordered region spans residues 155–447; it reads DAEGNERPES…EDDDDDDEER (293 aa). 2 stretches are compositionally biased toward acidic residues: residues 163–194 and 215–231; these read ESDDEDDEEDEEDEEEEEEGDEEDPGSGEIDG and VDVDEDEESDAEDDESE. The span at 232 to 242 shows a compositional bias: polar residues; the sequence is QATGVNGTSYR. Composition is skewed to acidic residues over residues 256 to 277, 284 to 309, 336 to 374, 397 to 415, and 433 to 447; these read VREDDGDDSESGEEEVGEDNDV, EDSENEEDGVDDEEDDEEDEEEEEVD, GDDDEDGDGETGEDDQGVEDDGEFADEDDDVEEEDEESG, PINEDNDPDEEEEVEDDLP, and DDDDGEDDDDDDEER.

This sequence belongs to the ANP32 family.

This Arabidopsis thaliana (Mouse-ear cress) protein is Acidic leucine-rich nuclear phosphoprotein 32-related protein.